A 196-amino-acid chain; its full sequence is Molybdopterin synthase catalytic subunit (196 aa).

The tract at residues 1-29 is disordered; it reads MSTLPSTDPPPLPASTSSQQPAVHIPPPS. Residues 145 to 146, Lys161, and 168 to 170 contribute to the substrate site; these read HR and KRE. Positions 174 to 196 are disordered; sequence GEPPGQGEWRANRDTDPEGKSTS. Residues 183 to 196 show a composition bias toward basic and acidic residues; sequence RANRDTDPEGKSTS.

It belongs to the MoaE family. MOCS2B subfamily. In terms of assembly, heterotetramer; composed of 2 small (MOCS2A) and 2 large (MOCS2B) subunits.

Its subcellular location is the cytoplasm. The catalysed reaction is 2 [molybdopterin-synthase sulfur-carrier protein]-C-terminal-Gly-aminoethanethioate + cyclic pyranopterin phosphate + H2O = molybdopterin + 2 [molybdopterin-synthase sulfur-carrier protein]-C-terminal Gly-Gly + 2 H(+). It participates in cofactor biosynthesis; molybdopterin biosynthesis. Its function is as follows. Catalytic subunit of the molybdopterin synthase complex, a complex that catalyzes the conversion of precursor Z into molybdopterin. Acts by mediating the incorporation of 2 sulfur atoms from thiocarboxylated MOCS2A into precursor Z to generate a dithiolene group. The protein is Molybdopterin synthase catalytic subunit of Coccidioides immitis (strain RS) (Valley fever fungus).